A 199-amino-acid polypeptide reads, in one-letter code: OPA3-like protein (199 aa).

Positions 98–141 (RSSEKDKKKEEALQNRFKNLEEKLEVQQETINNLTNVIEAIQSS) form a coiled coil.

The protein belongs to the OPA3 family.

This is OPA3-like protein from Dictyostelium discoideum (Social amoeba).